The sequence spans 324 residues: Glucosyl-3-phosphoglycerate synthase (324 aa).

UDP-alpha-D-glucose-binding positions include 50–54 (PALNE), serine 81, lysine 114, and 134–135 (DS). Aspartate 136 contacts Mn(2+). 184 to 187 (GRVT) contributes to the (2R)-3-phosphoglycerate binding site. Residues 229–232 (YGVE) and 256–261 (RAHRNR) each bind UDP-alpha-D-glucose. Histidine 258 lines the Mn(2+) pocket. Asparagine 260 provides a ligand contact to (2R)-3-phosphoglycerate.

Belongs to the glycosyltransferase 2 family. In terms of assembly, homotrimer. Mg(2+) serves as cofactor. Mn(2+) is required as a cofactor.

The enzyme catalyses an NDP-alpha-D-glucose + (2R)-3-phosphoglycerate = (2R)-2-O-(alpha-D-glucopyranosyl)-3-phospho-glycerate + a ribonucleoside 5'-diphosphate + H(+). It carries out the reaction (2R)-3-phosphoglycerate + UDP-alpha-D-glucose = (2R)-2-O-(alpha-D-glucopyranosyl)-3-phospho-glycerate + UDP + H(+). The catalysed reaction is ADP-alpha-D-glucose + (2R)-3-phosphoglycerate = (2R)-2-O-(alpha-D-glucopyranosyl)-3-phospho-glycerate + ADP + H(+). It catalyses the reaction GDP-D-glucose + (2R)-3-phosphoglycerate = (2R)-2-O-(alpha-D-glucopyranosyl)-3-phospho-glycerate + GDP + H(+). In terms of biological role, involved in the biosynthesis of 6-O-methylglucose lipopolysaccarides (MGLPs). Catalyzes the transfer of the glucose moiety from a nuleotide sugar such as UDP-alpha-D-glucose to the position 2 of 3-phospho-D-glycerate (3-PGA) to form glucosyl-3-phosphoglycerate (GPG). It can use UDP-glucose, ADP-glucose and GDP-glucose as sugar donor substrates with decreasing affinity and with 3-PGA as an acceptor. D-glycerate can only be an acceptor with ADP-glucose and at a very low rate. In Mycobacterium bovis (strain ATCC BAA-935 / AF2122/97), this protein is Glucosyl-3-phosphoglycerate synthase (gpgS).